The following is a 202-amino-acid chain: Small ribosomal subunit protein uS4 (202 aa).

Residues 22–43 (TRKSARRAYPPGQHGQNRKKRS) are disordered. The S4 RNA-binding domain maps to 90–152 (MRLDNTVFRL…AQSRKLVEAN (63 aa)).

The protein belongs to the universal ribosomal protein uS4 family. As to quaternary structure, part of the 30S ribosomal subunit. Contacts protein S5. The interaction surface between S4 and S5 is involved in control of translational fidelity.

In terms of biological role, one of the primary rRNA binding proteins, it binds directly to 16S rRNA where it nucleates assembly of the body of the 30S subunit. With S5 and S12 plays an important role in translational accuracy. The polypeptide is Small ribosomal subunit protein uS4 (Nostoc punctiforme (strain ATCC 29133 / PCC 73102)).